The sequence spans 126 residues: NADPH-dependent 7-cyano-7-deazaguanine reductase (126 aa).

The active-site Thioimide intermediate is Cys-40. Residue Asp-47 is the Proton donor of the active site. Substrate contacts are provided by residues 62–64 and 81–82; these read IEL and HE.

Belongs to the GTP cyclohydrolase I family. QueF type 1 subfamily.

It localises to the cytoplasm. It catalyses the reaction 7-aminomethyl-7-carbaguanine + 2 NADP(+) = 7-cyano-7-deazaguanine + 2 NADPH + 3 H(+). Its pathway is tRNA modification; tRNA-queuosine biosynthesis. In terms of biological role, catalyzes the NADPH-dependent reduction of 7-cyano-7-deazaguanine (preQ0) to 7-aminomethyl-7-deazaguanine (preQ1). This is NADPH-dependent 7-cyano-7-deazaguanine reductase from Campylobacter jejuni subsp. doylei (strain ATCC BAA-1458 / RM4099 / 269.97).